Reading from the N-terminus, the 175-residue chain is Co-chaperone protein HscB homolog (175 aa).

The 73-residue stretch at 7–79 (SHFDLFHLPA…LQRASYLLSL (73 aa)) folds into the J domain.

It belongs to the HscB family. In terms of assembly, interacts with HscA and stimulates its ATPase activity.

Its function is as follows. Co-chaperone involved in the maturation of iron-sulfur cluster-containing proteins. Seems to help targeting proteins to be folded toward HscA. The polypeptide is Co-chaperone protein HscB homolog (Burkholderia vietnamiensis (strain G4 / LMG 22486) (Burkholderia cepacia (strain R1808))).